Here is a 44-residue protein sequence, read N- to C-terminus: Mu-conotoxin-like Cal 12.1.3b (44 aa).

4 disulfide bridges follow: Cys-3-Cys-16, Cys-11-Cys-28, Cys-18-Cys-33, and Cys-27-Cys-38. At Pro-23 the chain carries 4-hydroxyproline. A 6'-bromotryptophan mark is found at Trp-36 and Trp-37. Pro-39 carries the 4-hydroxyproline modification. Trp-43 is modified (6'-bromotryptophan).

As to expression, expressed by the venom duct.

It localises to the secreted. Functionally, mu-conotoxins block voltage-gated sodium channels. This toxin reversibly blocks voltage-gated sodium channel in cephalopods, with no alteration in the voltage dependence of sodium conductance or on the kinetics of inactivation. The sequence is that of Mu-conotoxin-like Cal 12.1.3b from Californiconus californicus (California cone).